Here is a 155-residue protein sequence, read N- to C-terminus: Large ribosomal subunit protein eL19 (155 aa).

Basic residues predominate over residues 66–84 (VRHLQRRKGRRRGMGRRKG). A disordered region spans residues 66–85 (VRHLQRRKGRRRGMGRRKGV).

The protein belongs to the eukaryotic ribosomal protein eL19 family. Part of the 50S ribosomal subunit.

Its function is as follows. Binds to the 23S rRNA. The protein is Large ribosomal subunit protein eL19 of Aeropyrum pernix (strain ATCC 700893 / DSM 11879 / JCM 9820 / NBRC 100138 / K1).